The primary structure comprises 3583 residues: Surfactin synthase subunit 2 (3583 aa).

Carrier domains follow at residues 965–1039, 2005–2080, and 3034–3108; these read APKT…EENE, APET…EASA, and APTT…ERAE. O-(pantetheine 4'-phosphoryl)serine is present on residues serine 999, serine 2040, and serine 3069.

This sequence belongs to the ATP-dependent AMP-binding enzyme family. Requires pantetheine 4'-phosphate as cofactor.

The protein operates within antibiotic biosynthesis; surfactin biosynthesis. Its function is as follows. This protein is a multifunctional enzyme able to activate and polymerize the amino acids Leu, Glu, Asp and Val. Activation sites for these AA consist of individual domains. The polypeptide is Surfactin synthase subunit 2 (srfAB) (Bacillus subtilis (strain 168)).